A 988-amino-acid chain; its full sequence is Bifunctional glutamine synthetase adenylyltransferase/adenylyl-removing enzyme (988 aa).

The adenylyl removase stretch occupies residues 1 to 472 (MTKRETVERR…RYSALFEQET (472 aa)). The segment at 476–988 (GEAGNLVFTG…AFVAVVKNGG (513 aa)) is adenylyl transferase.

Belongs to the GlnE family. Mg(2+) is required as a cofactor.

It carries out the reaction [glutamine synthetase]-O(4)-(5'-adenylyl)-L-tyrosine + phosphate = [glutamine synthetase]-L-tyrosine + ADP. The enzyme catalyses [glutamine synthetase]-L-tyrosine + ATP = [glutamine synthetase]-O(4)-(5'-adenylyl)-L-tyrosine + diphosphate. In terms of biological role, involved in the regulation of glutamine synthetase GlnA, a key enzyme in the process to assimilate ammonia. When cellular nitrogen levels are high, the C-terminal adenylyl transferase (AT) inactivates GlnA by covalent transfer of an adenylyl group from ATP to specific tyrosine residue of GlnA, thus reducing its activity. Conversely, when nitrogen levels are low, the N-terminal adenylyl removase (AR) activates GlnA by removing the adenylyl group by phosphorolysis, increasing its activity. The regulatory region of GlnE binds the signal transduction protein PII (GlnB) which indicates the nitrogen status of the cell. The sequence is that of Bifunctional glutamine synthetase adenylyltransferase/adenylyl-removing enzyme from Agrobacterium fabrum (strain C58 / ATCC 33970) (Agrobacterium tumefaciens (strain C58)).